The chain runs to 724 residues: Acyl-coenzyme A oxidase 2 (724 aa).

The segment at 1 to 23 (MALISNLKDEYDHPTKTDPDTNP) is disordered. The segment covering 7–21 (LKDEYDHPTKTDPDT) has biased composition (basic and acidic residues).

This sequence belongs to the acyl-CoA oxidase family. It depends on FAD as a cofactor.

It localises to the peroxisome. The catalysed reaction is a 2,3-saturated acyl-CoA + O2 = a (2E)-enoyl-CoA + H2O2. The protein operates within lipid metabolism; peroxisomal fatty acid beta-oxidation. The chain is Acyl-coenzyme A oxidase 2 (POX2) from Candida maltosa (Yeast).